Here is a 216-residue protein sequence, read N- to C-terminus: ATP synthase subunit a (216 aa).

A run of 7 helical transmembrane segments spans residues 1–21, 62–82, 88–108, 119–139, 149–169, 174–194, and 196–216; these read MEYS…IFVL, LIAA…VPGF, NINT…FEGF, FMGP…ISHI, LFAN…LVIK, LVVS…AIFI, and TYIF…HEEH.

The protein belongs to the ATPase A chain family. In terms of assembly, F-type ATPases have 2 components, CF(1) - the catalytic core - and CF(0) - the membrane proton channel. CF(1) has five subunits: alpha(3), beta(3), gamma(1), delta(1), epsilon(1). CF(0) has three main subunits: a(1), b(2) and c(9-12). The alpha and beta chains form an alternating ring which encloses part of the gamma chain. CF(1) is attached to CF(0) by a central stalk formed by the gamma and epsilon chains, while a peripheral stalk is formed by the delta and b chains.

The protein localises to the cell inner membrane. Its function is as follows. Key component of the proton channel; it plays a direct role in the translocation of protons across the membrane. The sequence is that of ATP synthase subunit a from Aquifex aeolicus (strain VF5).